A 56-amino-acid polypeptide reads, in one-letter code: Photosystem II reaction center X protein (56 aa).

A helical transmembrane segment spans residues 27-47 (IGSFLAAGALIVAPAAAALIW).

The protein belongs to the PsbX family. Type 2 subfamily. As to quaternary structure, PSII consists of a core antenna complex that captures photons, and an electron transfer chain that converts photonic excitation into a charge separation. PSII forms dimeric complexes.

The protein resides in the cellular thylakoid membrane. In terms of biological role, involved in the binding and/or turnover of quinones at the Q(B) site of Photosystem II. This chain is Photosystem II reaction center X protein, found in Prochlorococcus marinus (strain NATL2A).